A 440-amino-acid polypeptide reads, in one-letter code: Serine/threonine-protein kinase 2 (440 aa).

The region spanning 85-440 (NDDFYHISTG…FSNWINGESC (356 aa)) is the Protein kinase domain. ATP-binding positions include 91–99 (ISTGGYGIV) and Lys-115. Asp-306 functions as the Proton acceptor in the catalytic mechanism.

This sequence belongs to the protein kinase superfamily. Ser/Thr protein kinase family. Poxviruses subfamily. Phosphorylated in vivo. Autophosphorylated in vitro.

It is found in the host endoplasmic reticulum. The protein resides in the host endoplasmic reticulum-Golgi intermediate compartment. It catalyses the reaction L-seryl-[protein] + ATP = O-phospho-L-seryl-[protein] + ADP + H(+). The catalysed reaction is L-threonyl-[protein] + ATP = O-phospho-L-threonyl-[protein] + ADP + H(+). Essential serine-protein kinase involved in the early stage of virion morphogenesis. The polypeptide is Serine/threonine-protein kinase 2 (OPG054) (Sus scrofa (Pig)).